The following is a 735-amino-acid chain: Protein RETICULATA-RELATED 5, chloroplastic (735 aa).

The N-terminal 75 residues, 1–75, are a transit peptide targeting the chloroplast; sequence MKPTTNGGLL…TRRAILVAPP (75 aa). Helical transmembrane passes span 519–539 and 582–602; these read ASVV…FISY and VIIG…AAVG. Residues 714 to 726 show a composition bias toward polar residues; that stretch reads ASQSTVEYSTTEE. The interval 714-735 is disordered; it reads ASQSTVEYSTTEEASMDDLKNQ.

This sequence belongs to the RETICULATA family.

The protein localises to the plastid. It localises to the chloroplast membrane. In terms of biological role, may play a role in leaf development. The chain is Protein RETICULATA-RELATED 5, chloroplastic from Arabidopsis thaliana (Mouse-ear cress).